Consider the following 156-residue polypeptide: Small ribosomal subunit protein uS7 (156 aa).

It belongs to the universal ribosomal protein uS7 family. In terms of assembly, part of the 30S ribosomal subunit. Contacts proteins S9 and S11.

Its function is as follows. One of the primary rRNA binding proteins, it binds directly to 16S rRNA where it nucleates assembly of the head domain of the 30S subunit. Is located at the subunit interface close to the decoding center, probably blocks exit of the E-site tRNA. The polypeptide is Small ribosomal subunit protein uS7 (Methylobacterium nodulans (strain LMG 21967 / CNCM I-2342 / ORS 2060)).